The primary structure comprises 213 residues: Adenylate kinase (213 aa).

Residue 10 to 15 participates in ATP binding; the sequence is GSGKGT. Residues 30-59 form an NMP region; that stretch reads SVGDLLRNIISSESKLGKGIKDTVESGNLI. Residues Arg-36, 57–59, 83–86, and Gln-90 contribute to the AMP site; these read NLI and GFPR. An LID region spans residues 125–160; that stretch reads DRLTCLDCKSIYSISSFKNTTCAKCKSTRLEKRIDD. An ATP-binding site is contributed by Arg-126. Zn(2+)-binding residues include Cys-129 and Cys-132. 135–136 serves as a coordination point for ATP; the sequence is IY. Positions 146 and 149 each coordinate Zn(2+). Arg-157 and Arg-169 together coordinate AMP. Leu-195 lines the ATP pocket.

The protein belongs to the adenylate kinase family. Monomer.

It localises to the cytoplasm. It carries out the reaction AMP + ATP = 2 ADP. It participates in purine metabolism; AMP biosynthesis via salvage pathway; AMP from ADP: step 1/1. Catalyzes the reversible transfer of the terminal phosphate group between ATP and AMP. Plays an important role in cellular energy homeostasis and in adenine nucleotide metabolism. This chain is Adenylate kinase, found in Wolbachia pipientis subsp. Culex pipiens (strain wPip).